The primary structure comprises 115 residues: uncharacterized protein (115 aa).

Positions Met1–Thr24 are cleaved as a signal peptide. 2 consecutive transmembrane segments (helical) span residues Phe39 to Ile59 and Tyr93 to Ser113.

The protein localises to the membrane. This is an uncharacterized protein from Saccharomyces cerevisiae (strain ATCC 204508 / S288c) (Baker's yeast).